A 159-amino-acid polypeptide reads, in one-letter code: Phosphopantetheine adenylyltransferase (159 aa).

His16 contacts ATP. Residues Lys40, Met72, and Arg86 each contribute to the substrate site. Residues 87–89, Glu97, and 122–128 contribute to the ATP site; these read GLR and YQYLSAS.

Belongs to the bacterial CoaD family. In terms of assembly, homohexamer. Requires Mg(2+) as cofactor.

The protein localises to the cytoplasm. The catalysed reaction is (R)-4'-phosphopantetheine + ATP + H(+) = 3'-dephospho-CoA + diphosphate. Its pathway is cofactor biosynthesis; coenzyme A biosynthesis; CoA from (R)-pantothenate: step 4/5. Reversibly transfers an adenylyl group from ATP to 4'-phosphopantetheine, yielding dephospho-CoA (dPCoA) and pyrophosphate. This is Phosphopantetheine adenylyltransferase from Dehalococcoides mccartyi (strain ATCC BAA-2100 / JCM 16839 / KCTC 5957 / BAV1).